The chain runs to 313 residues: MLKMESTQQMVSSIINTSFEAAVVAATSTLELMGIQYDYNEVFTRVKSKFDYVMDDSGVKNNLLGKAITIAQALNGKFGSAIRNRNWMTDSKTVAKLDEDVSKLRMTLSSKGIDQKMRVLNACFSVKRIPGKSSSIIKCTRLMKDKIEGGEVEVDDSYVDEKMEIDTIDWKSRYDQLEKRFEALKQRVNEKYNTWVQKAKKVNENMYSLQNVISQQQNQISDLQQYCNKLEADLQGKFSSLVSSVEWYLRSMELPDDVKNDIEQQLNSIDAINPINAIDDIESLIRNLIQDYDRTFLMLKGLLKQCNYEYAYE.

The segment at 1–149 (MLKMESTQQM…TRLMKDKIEG (149 aa)) is RNA-binding. Positions 150–206 (GEVEVDDSYVDEKMEIDTIDWKSRYDQLEKRFEALKQRVNEKYNTWVQKAKKVNENM) are dimerization. The stretch at 166–237 (DTIDWKSRYD…NKLEADLQGK (72 aa)) forms a coiled coil. An interaction with host ZC3H7B region spans residues 170–234 (WKSRYDQLEK…QYCNKLEADL (65 aa)). An interaction with host EIF4G1 region spans residues 208–313 (SLQNVISQQQ…KQCNYEYAYE (106 aa)).

The protein belongs to the rotavirus NSP3 family. Homodimer. Interacts (via the coiled-coil region) with host ZC3H7B (via LD motif). Interacts with host EIF4G1.

The protein localises to the host cytoplasm. Its function is as follows. Plays an important role in stimulating the translation of viral mRNAs. These mRNAs are capped but not polyadenylated, instead terminating in a conserved sequence 'GACC' at the 3' that is recognized by NSP3, which competes with host PABPC1 for EIF4G1 binding. The interaction between NSP3 and host EIF4G1 stabilizes the EIF4E-EIF4G1 interaction, thereby facilitating the initiation of capped mRNA translation. The sequence is that of Non-structural protein 3 from Homo sapiens (Human).